Here is a 307-residue protein sequence, read N- to C-terminus: Cysteine synthase (307 aa).

Lys42 carries the N6-(pyridoxal phosphate)lysine modification. Pyridoxal 5'-phosphate contacts are provided by residues Asn72, 176–180, and Ser263; that span reads GTGGH.

It belongs to the cysteine synthase/cystathionine beta-synthase family. The cofactor is pyridoxal 5'-phosphate.

It carries out the reaction O-acetyl-L-serine + hydrogen sulfide = L-cysteine + acetate. The protein operates within amino-acid biosynthesis; L-cysteine biosynthesis; L-cysteine from L-serine: step 2/2. The chain is Cysteine synthase (cysK) from Flavobacterium sp. (strain K3-15 / DSM ID92-509).